We begin with the raw amino-acid sequence, 536 residues long: Sensory rhodopsin I transducer (536 aa).

Residues 2–14 lie on the Cytoplasmic side of the membrane; sequence TIAWARRRYGVKL. The helical transmembrane segment at 15–29 threads the bilayer; the sequence is GLGYIATAGLLVGVG. Over 30–39 the chain is Extracellular; the sequence is VTTNDVPSTI. Residues 40–55 traverse the membrane as a helical segment; it reads VAGIAGLLTLGSINAA. Residues 55-107 enclose the HAMP 1 domain; it reads AETVASIKEIAAQTERVANGNLEQEVTSTRTDEFGSLADSIEQMRQSLRGRLN. At 56 to 536 the chain is on the cytoplasmic side; it reads ETVASIKEIA…MRAGADGGGA (481 aa). The interval 116–145 is disordered; the sequence is LEETQAEAETAREEAEQAKQEAQAAEREAR. The span at 124–145 shows a compositional bias: basic and acidic residues; the sequence is ETAREEAEQAKQEAQAAEREAR. The 54-residue stretch at 149-202 folds into the HAMP 2 domain; sequence ATYQDTAKRYGETMEAAATGDLTQRVDVDTDHEAMETVGTAFNQMMDDLQATVR. Residues 221-459 form the Methyl-accepting transducer domain; it reads TSADIEASAG…STATSVERVA (239 aa). Glutamate 266 is subject to Glutamate methyl ester (Glu). Residues 278–307 form a disordered region; sequence SEDVATASDAARDSSKSALDEMSSIETEVD. A compositionally biased stretch (basic and acidic residues) spans 287-296; sequence AARDSSKSAL. The residue at position 473 (glutamate 473) is a Glutamate methyl ester (Glu). A disordered region spans residues 512 to 536; it reads TEDSETAGGSVEQPVMRAGADGGGA.

The protein belongs to the methyl-accepting chemotaxis (MCP) protein family. In terms of processing, methylated by CheR.

The protein localises to the cell membrane. Transduces signals from the phototaxis receptor sensory rhodopsin I (SR-I) to the flagellar motor. Responds to light changes through the variation of the level of methylation. The chain is Sensory rhodopsin I transducer (htr1) from Halobacterium salinarum (strain ATCC 29341 / DSM 671 / R1).